The chain runs to 229 residues: Synaptogyrin-3 (229 aa).

The residue at position 1 (Met1) is an N-acetylmethionine. The region spanning 20 to 172 is the MARVEL domain; it reads FARRPQTLLR…LTVKALQRFR (153 aa). 4 helical membrane passes run 30–50, 70–90, 105–125, and 148–168; these read VASW…GYVN, FGVA…LLDV, VLLD…GFCF, and AAIA…VKAL. Residues 209–219 are compositionally biased toward polar residues; sequence QSPPFTETLDT. Residues 209–229 form a disordered region; it reads QSPPFTETLDTSPKGYQVPAY.

It belongs to the synaptogyrin family. In terms of assembly, interacts (via N-terminus) with SLC6A3 (via N-terminus). May interact with VMAT2. As to expression, expressed in brain and placenta.

The protein localises to the cytoplasmic vesicle. It localises to the secretory vesicle. It is found in the synaptic vesicle membrane. The protein resides in the synapse. May play a role in regulated exocytosis. May indirectly regulate the activity of the plasma membrane dopamine transporter SLC6A3 and thereby regulate dopamine transport back from the synaptic cleft into the presynaptic terminal. In Homo sapiens (Human), this protein is Synaptogyrin-3.